The following is a 227-amino-acid chain: Superoxide dismutase [Cu-Zn] (227 aa).

A signal peptide spans 1 to 19; sequence MPKLLPPVVLAGCVVALGA. The N-palmitoyl cysteine moiety is linked to residue Cys20. Cys20 is lipidated: S-diacylglycerol cysteine. The disordered stretch occupies residues 23-55; sequence PQHASSLPGTTPAVWTGSPSPSGAGAAEAAPAA. Low complexity predominate over residues 39–55; sequence GSPSPSGAGAAEAAPAA. 2 residues coordinate Cu cation: His103 and His105. An intrachain disulfide couples Cys110 to Cys221. Asp145 serves as a coordination point for Zn(2+). Cu cation is bound at residue His182.

This sequence belongs to the Cu-Zn superoxide dismutase family. The cofactor is Cu cation. Zn(2+) serves as cofactor.

It localises to the cell membrane. The enzyme catalyses 2 superoxide + 2 H(+) = H2O2 + O2. Its function is as follows. Destroys radicals which are normally produced within the cells and which are toxic to biological systems. May play a role in favoring mycobacterial survival in phagocytes. The chain is Superoxide dismutase [Cu-Zn] (sodC) from Mycolicibacterium paratuberculosis (strain ATCC BAA-968 / K-10) (Mycobacterium paratuberculosis).